The primary structure comprises 441 residues: Probable magnesium transporter NIPA8 (441 aa).

Residues 1–4 (MGEW) lie on the Extracellular side of the membrane. A helical membrane pass occupies residues 5–25 (VIGAFINIFGSVAINFGTNLL). At 26–56 (KLGHNERERLALQDGGGKMPLKPIIHNQTWR) the chain is on the cytoplasmic side. Residues 57–77 (VGILVFLLGNCLNFISFGYAA) form a helical membrane-spanning segment. Residues 78 to 79 (QS) lie on the Extracellular side of the membrane. A helical membrane pass occupies residues 80–100 (LLAALGSIQFVSNIAFAYVVL). Residues 101–105 (NKMVT) lie on the Cytoplasmic side of the membrane. Residues 106-126 (VKVLVATAFIVLGNVFLVAFG) form a helical membrane-spanning segment. Residues 127–144 (NHQSPVFTPEQLAEKYSN) are Extracellular-facing. Residues 145–165 (VTFLVYCGILILIVAVHHFLY) form a helical membrane-spanning segment. Residues 166-184 (RKGEVLISTPGQEISSYWK) are Cytoplasmic-facing. The helical transmembrane segment at 185 to 205 (MLLPFSYAVVSGAIGSCSVLF) threads the bilayer. Over 206–222 (AKSLSNLLRLAMSSSYQ) the chain is Extracellular. Residues 223–243 (LHSWFTYSMLLLFLSTAGFWM) form a helical membrane-spanning segment. Over 244 to 255 (TRLNEGLSLYDA) the chain is Cytoplasmic. A helical transmembrane segment spans residues 256 to 276 (ILIVPMFQIAWTFFSICTGCI). Residues 277 to 288 (YFQEFQVFDALR) are Extracellular-facing. A helical transmembrane segment spans residues 289–309 (TTMFILGMMCVFIGISLLAPD). Residues 310 to 441 (DTRGNETKDN…MLEKTISSKA (132 aa)) are Cytoplasmic-facing. Residues 313–347 (GNETKDNSSSLDSIVSSSVPTEEDRLIPQSSEDGH) form a disordered region. Positions 320–330 (SSSLDSIVSSS) are enriched in low complexity. A compositionally biased stretch (basic and acidic residues) spans 334 to 347 (EEDRLIPQSSEDGH).

The protein belongs to the NIPA (TC 2.A.7) family. As to quaternary structure, homodimer.

It is found in the cell membrane. Its subcellular location is the early endosome. Acts as a Mg(2+) transporter. Can also transport other divalent cations such as Fe(2+), Sr(2+), Ba(2+), Mn(2+) and Co(2+) but to a much less extent than Mg(2+). The sequence is that of Probable magnesium transporter NIPA8 from Arabidopsis thaliana (Mouse-ear cress).